The sequence spans 143 residues: Peptide methionine sulfoxide reductase MsrB (143 aa).

The 123-residue stretch at Lys-5–Lys-127 folds into the MsrB domain. The Nucleophile role is filled by Cys-116.

It belongs to the MsrB Met sulfoxide reductase family.

The catalysed reaction is L-methionyl-[protein] + [thioredoxin]-disulfide + H2O = L-methionyl-(R)-S-oxide-[protein] + [thioredoxin]-dithiol. The chain is Peptide methionine sulfoxide reductase MsrB from Bacillus pumilus (strain SAFR-032).